Reading from the N-terminus, the 411-residue chain is Serine hydroxymethyltransferase (411 aa).

120–122 (GHL) is a binding site for (6S)-5,6,7,8-tetrahydrofolate. Position 225 is an N6-(pyridoxal phosphate)lysine (lysine 225). Residues glutamate 241 and 350 to 352 (SPF) contribute to the (6S)-5,6,7,8-tetrahydrofolate site.

Belongs to the SHMT family. As to quaternary structure, homodimer. The cofactor is pyridoxal 5'-phosphate.

The protein resides in the cytoplasm. The enzyme catalyses (6R)-5,10-methylene-5,6,7,8-tetrahydrofolate + glycine + H2O = (6S)-5,6,7,8-tetrahydrofolate + L-serine. Its pathway is one-carbon metabolism; tetrahydrofolate interconversion. It functions in the pathway amino-acid biosynthesis; glycine biosynthesis; glycine from L-serine: step 1/1. Its function is as follows. Catalyzes the reversible interconversion of serine and glycine with tetrahydrofolate (THF) serving as the one-carbon carrier. This reaction serves as the major source of one-carbon groups required for the biosynthesis of purines, thymidylate, methionine, and other important biomolecules. Also exhibits THF-independent aldolase activity toward beta-hydroxyamino acids, producing glycine and aldehydes, via a retro-aldol mechanism. The polypeptide is Serine hydroxymethyltransferase (Limosilactobacillus fermentum (strain NBRC 3956 / LMG 18251) (Lactobacillus fermentum)).